Consider the following 636-residue polypeptide: Chaperone protein DnaK (636 aa).

The disordered stretch occupies residues 579 to 636; that stretch reads ELYKNAAPPPGADGQQGADGQQGADGQQGADGQQGADGQQGADGQTTESSSNDETKTN. Residues 590–623 show a composition bias toward low complexity; it reads ADGQQGADGQQGADGQQGADGQQGADGQQGADGQ.

The protein belongs to the heat shock protein 70 family.

In terms of biological role, acts as a chaperone. The protein is Chaperone protein DnaK of Nitrosopumilus maritimus (strain SCM1).